Consider the following 538-residue polypeptide: T-complex protein 1 subunit epsilon (538 aa).

It belongs to the TCP-1 chaperonin family. As to quaternary structure, heterooligomeric complex of about 850 to 900 kDa that forms two stacked rings, 12 to 16 nm in diameter.

The protein resides in the cytoplasm. Functionally, molecular chaperone; assists the folding of proteins upon ATP hydrolysis. Known to play a role, in vitro, in the folding of actin and tubulin. This Dictyostelium discoideum (Social amoeba) protein is T-complex protein 1 subunit epsilon (cct5).